Here is a 108-residue protein sequence, read N- to C-terminus: Class I hydrophobin 3 (108 aa).

Positions 1-17 (MFSRVFAVASLAALALA) are cleaved as a signal peptide. 4 disulfides stabilise this stretch: Cys-26-Cys-87, Cys-33-Cys-81, Cys-34-Cys-67, and Cys-88-Cys-101.

This sequence belongs to the fungal hydrophobin family. In terms of assembly, self-assembles to form functional amyloid fibrils called rodlets. Self-assembly into fibrillar rodlets occurs spontaneously at hydrophobic:hydrophilic interfaces and the rodlets further associate laterally to form amphipathic monolayers.

Its subcellular location is the secreted. It is found in the cell wall. Aerial growth, conidiation, and dispersal of filamentous fungi in the environment rely upon a capability of their secreting small amphipathic proteins called hydrophobins (HPBs) with low sequence identity. Class I can self-assemble into an outermost layer of rodlet bundles on aerial cell surfaces, conferring cellular hydrophobicity that supports fungal growth, development and dispersal; whereas Class II form highly ordered films at water-air interfaces through intermolecular interactions but contribute nothing to the rodlet structure. In Pisolithus tinctorius (Dead man's foot), this protein is Class I hydrophobin 3.